The sequence spans 62 residues: Small ribosomal subunit protein eS27 (62 aa).

The Zn(2+) site is built by C17, C20, C36, and C39. The C4-type zinc-finger motif lies at 17 to 39; it reads CPDCDNEQTVFSKASTTVKCVVC.

It belongs to the eukaryotic ribosomal protein eS27 family. As to quaternary structure, part of the 30S ribosomal subunit. It depends on Zn(2+) as a cofactor.

The sequence is that of Small ribosomal subunit protein eS27 from Methanoregula boonei (strain DSM 21154 / JCM 14090 / 6A8).